A 317-amino-acid chain; its full sequence is Lipase 1 (317 aa).

The first 18 residues, 1 to 18 (MLLKRLCFAALFSLSMVG), serve as a signal peptide directing secretion. Cys19 carries N-palmitoyl cysteine lipidation. Cys19 carries the S-diacylglycerol cysteine lipid modification. The 228-residue stretch at 69-296 (PLLLIHGFGG…MEDVGHVPMV (228 aa)) folds into the AB hydrolase-1 domain. His74 is a catalytic residue. Ser142 (nucleophile) is an active-site residue. Catalysis depends on charge relay system residues Glu270 and His292.

Its subcellular location is the cell outer membrane. It carries out the reaction a triacylglycerol + H2O = a diacylglycerol + a fatty acid + H(+). This Psychrobacter immobilis protein is Lipase 1 (lip1).